The following is a 72-amino-acid chain: Gas vesicle protein A (72 aa).

The protein belongs to the gas vesicle GvpA family. The gas vesicle shell is 2 nm thick and consists of a single layer of this protein. It forms helical ribs nearly perpendicular to the long axis of the vesicle.

It localises to the gas vesicle shell. Its function is as follows. Gas vesicles are hollow, gas filled proteinaceous nanostructures found in some microorganisms. During planktonic growth they allow positioning of the organism at a favorable depth for light or nutrient acquisition. GvpA forms the protein shell. This chain is Gas vesicle protein A, found in Planktothrix agardhii (Oscillatoria agardhii).